We begin with the raw amino-acid sequence, 70 residues long: Large ribosomal subunit protein bL32 (70 aa).

Basic residues predominate over residues 1-19 (MAVPKKKTSPSRRGMRRSH). Positions 1 to 21 (MAVPKKKTSPSRRGMRRSHQA) are disordered.

This sequence belongs to the bacterial ribosomal protein bL32 family.

The sequence is that of Large ribosomal subunit protein bL32 from Granulibacter bethesdensis (strain ATCC BAA-1260 / CGDNIH1).